A 375-amino-acid chain; its full sequence is tRNA-specific 2-thiouridylase MnmA (375 aa).

ATP contacts are provided by residues 9-16 and Leu35; that span reads AMSGGVDS. Catalysis depends on Cys105, which acts as the Nucleophile. Residues Cys105 and Cys201 are joined by a disulfide bond. Gly129 contacts ATP. An interaction with tRNA region spans residues 151 to 153; it reads KNQ. The active-site Cysteine persulfide intermediate is Cys201. Residues 307–308 are interaction with tRNA; the sequence is RY.

It belongs to the MnmA/TRMU family.

Its subcellular location is the cytoplasm. The enzyme catalyses S-sulfanyl-L-cysteinyl-[protein] + uridine(34) in tRNA + AH2 + ATP = 2-thiouridine(34) in tRNA + L-cysteinyl-[protein] + A + AMP + diphosphate + H(+). Its function is as follows. Catalyzes the 2-thiolation of uridine at the wobble position (U34) of tRNA, leading to the formation of s(2)U34. This chain is tRNA-specific 2-thiouridylase MnmA, found in Leptospira interrogans serogroup Icterohaemorrhagiae serovar Lai (strain 56601).